A 93-amino-acid polypeptide reads, in one-letter code: MKDPNRPTLSVTLDGREVKLVPVIIEGYRLEVEGKNVTSFLSKTPPIMRAVGALEGRGDFGVGDLEVASDTRKWTVSGPVKQDTGKTDPAEKN.

The segment at 73–93 is disordered; that stretch reads KWTVSGPVKQDTGKTDPAEKN. Positions 83 to 93 are enriched in basic and acidic residues; it reads DTGKTDPAEKN.

This is an uncharacterized protein from Rhodobacter capsulatus (Rhodopseudomonas capsulata).